A 143-amino-acid polypeptide reads, in one-letter code: HTH-type transcriptional regulator BudR (143 aa).

One can recognise an HTH lysR-type domain in the interval 1–58 (MELRYLRYFVAVARERHFTRAAKALGISQPPLSQQIKRLEEEVGTPLFRRLTRGVELT). A DNA-binding region (H-T-H motif) is located at residues 18 to 37 (FTRAAKALGISQPPLSQQIK).

The protein belongs to the LysR transcriptional regulatory family.

Functionally, regulator of the budABC operon for 2,3-butanediol synthesis. The polypeptide is HTH-type transcriptional regulator BudR (budR) (Klebsiella aerogenes (Enterobacter aerogenes)).